Reading from the N-terminus, the 184-residue chain is NADH-quinone oxidoreductase subunit B (184 aa).

4 residues coordinate [4Fe-4S] cluster: Cys-37, Cys-38, Cys-103, and Cys-132.

Belongs to the complex I 20 kDa subunit family. As to quaternary structure, NDH-1 is composed of 14 different subunits. Subunits NuoB, C, D, E, F, and G constitute the peripheral sector of the complex. [4Fe-4S] cluster is required as a cofactor.

The protein resides in the cell membrane. The catalysed reaction is a quinone + NADH + 5 H(+)(in) = a quinol + NAD(+) + 4 H(+)(out). NDH-1 shuttles electrons from NADH, via FMN and iron-sulfur (Fe-S) centers, to quinones in the respiratory chain. The immediate electron acceptor for the enzyme in this species is believed to be a menaquinone. Couples the redox reaction to proton translocation (for every two electrons transferred, four hydrogen ions are translocated across the cytoplasmic membrane), and thus conserves the redox energy in a proton gradient. This chain is NADH-quinone oxidoreductase subunit B, found in Mycolicibacterium vanbaalenii (strain DSM 7251 / JCM 13017 / BCRC 16820 / KCTC 9966 / NRRL B-24157 / PYR-1) (Mycobacterium vanbaalenii).